The primary structure comprises 217 residues: Adenylate kinase (217 aa).

An ATP-binding site is contributed by 10–15 (GAGKGT). Residues 30–59 (STGDLFRANISQQTELGKLAKSYMNAGNLV) are NMP. Residues Thr31, Arg36, 57-59 (NLV), 85-88 (GFPR), and Gln92 each bind AMP. The segment at 126 to 164 (GRRVCRNEPKHVFHVTYTPPKKEGVCDVCGGELYQRDDD) is LID. ATP contacts are provided by residues Arg127 and 137 to 138 (VF). The AMP site is built by Arg161 and Arg172. ATP is bound at residue Gly200.

It belongs to the adenylate kinase family. As to quaternary structure, monomer.

The protein localises to the cytoplasm. It carries out the reaction AMP + ATP = 2 ADP. It functions in the pathway purine metabolism; AMP biosynthesis via salvage pathway; AMP from ADP: step 1/1. Functionally, catalyzes the reversible transfer of the terminal phosphate group between ATP and AMP. Plays an important role in cellular energy homeostasis and in adenine nucleotide metabolism. This is Adenylate kinase from Streptomyces coelicolor (strain ATCC BAA-471 / A3(2) / M145).